The sequence spans 832 residues: Thymine dioxygenase JBP1-A (832 aa).

Residues 1 to 12 (MKQKRGKQDVKM) are compositionally biased toward basic and acidic residues. Positions 1-24 (MKQKRGKQDVKMLESAPPQLLPKK) are disordered. Residues 80–282 (VVGGVFLPGA…RLTCVCYYRA (203 aa)) form a thymine dioxygenase region. Fe cation-binding residues include His-207, Asp-209, and His-257. Residue Arg-273 coordinates 2-oxoglutarate. The DNA-binding JBP1 domain stretch occupies residues 409–578 (LGGALKAAEE…IEEARRRGSS (170 aa)).

This sequence belongs to the TET family. JBP1 subfamily. In terms of assembly, monomer. Binds to DNA as a monomer. Fe(2+) serves as cofactor.

It is found in the nucleus. It catalyses the reaction thymine + 2-oxoglutarate + O2 = 5-hydroxymethyluracil + succinate + CO2. In terms of biological role, dioxygenase that catalyzes the first step of DNA base J (beta-d-glucosyl-HOMedU) biosynthesis by converting thymine to 5-hydroxymethyluracil (HOMedU). DNA base J is a hypermodified thymidine residue found in the genome of kinetoplastid parasites, which is localized primarily to repetitive DNA, namely the telomeres, and is implicated in the regulation of antigenic variation. Also specifically binds to base J-containing DNA (J-DNA). Involved in propagation and maintenance of DNA base J synthesis initiated by JBP2 by specifically binding already synthesized DNA base J and propagating J synthesis. Thymine dioxygenase activity and J-DNA-binding are independent functions. This chain is Thymine dioxygenase JBP1-A (JBP1A), found in Trypanosoma cruzi (strain CL Brener).